Reading from the N-terminus, the 489-residue chain is UDP-N-acetylmuramate--L-alanine ligase (489 aa).

128-134 (GTHGKTT) serves as a coordination point for ATP.

Belongs to the MurCDEF family.

The protein localises to the cytoplasm. The enzyme catalyses UDP-N-acetyl-alpha-D-muramate + L-alanine + ATP = UDP-N-acetyl-alpha-D-muramoyl-L-alanine + ADP + phosphate + H(+). It functions in the pathway cell wall biogenesis; peptidoglycan biosynthesis. Cell wall formation. In Shewanella sediminis (strain HAW-EB3), this protein is UDP-N-acetylmuramate--L-alanine ligase.